A 204-amino-acid polypeptide reads, in one-letter code: Holliday junction branch migration complex subunit RuvA (204 aa).

The domain I stretch occupies residues 1-64 (MIGRLRGIIL…EDAQLLFGFN (64 aa)). Positions 65-143 (SKPERALFRE…GMHGDLFASD (79 aa)) are domain II. The segment at 144-155 (APFALTSEMPKE) is flexible linker. Residues 156-204 (TANDAEGEAVAALTALGYKPQEASRMIVKVGKPDADCETLIREALRAAI) are domain III.

It belongs to the RuvA family. Homotetramer. Forms an RuvA(8)-RuvB(12)-Holliday junction (HJ) complex. HJ DNA is sandwiched between 2 RuvA tetramers; dsDNA enters through RuvA and exits via RuvB. An RuvB hexamer assembles on each DNA strand where it exits the tetramer. Each RuvB hexamer is contacted by two RuvA subunits (via domain III) on 2 adjacent RuvB subunits; this complex drives branch migration. In the full resolvosome a probable DNA-RuvA(4)-RuvB(12)-RuvC(2) complex forms which resolves the HJ.

Its subcellular location is the cytoplasm. Its function is as follows. The RuvA-RuvB-RuvC complex processes Holliday junction (HJ) DNA during genetic recombination and DNA repair, while the RuvA-RuvB complex plays an important role in the rescue of blocked DNA replication forks via replication fork reversal (RFR). RuvA specifically binds to HJ cruciform DNA, conferring on it an open structure. The RuvB hexamer acts as an ATP-dependent pump, pulling dsDNA into and through the RuvAB complex. HJ branch migration allows RuvC to scan DNA until it finds its consensus sequence, where it cleaves and resolves the cruciform DNA. This chain is Holliday junction branch migration complex subunit RuvA, found in Erwinia tasmaniensis (strain DSM 17950 / CFBP 7177 / CIP 109463 / NCPPB 4357 / Et1/99).